The primary structure comprises 297 residues: MADGDSGSERGGSSGGLQHFQREQETQELASKRLDIQNKRFYLDVKQNAKGRFIKIAEVGAGGSKSRLTLSMSVAAEFRDYLGDFIEHYAQLGPSSPEQIAQSSGGDDGGPRRALKSEFLVRENRKYYLDLKENQRGRFLRIRQTVNRGPGFGVGGGGGPGGGVQAGQTIALPAQGLIEFRDALAKLIDDYGGEDEELSGGPGAAGGYGELPEGTSIMVDSKRFFFDVGSNKYGVFLRVSEVKPSYRNSITIPFKAWGKFGGAFSRYAEEMKEIQERHRDKMYERREESEGEDVDDD.

Disordered stretches follow at residues Met-1–Thr-26 and Gln-275–Asp-297. Residue Ala-2 is modified to N-acetylalanine. The segment at Glu-23 to Tyr-246 is DNA-binding. Residues Gln-275 to Glu-288 are compositionally biased toward basic and acidic residues.

It belongs to the PUR DNA-binding protein family.

The protein resides in the nucleus. In terms of biological role, transcriptional regulator which can act as an activator or a repressor. In Danio rerio (Zebrafish), this protein is Transcriptional regulator protein Pur-beta (purb).